The following is a 306-amino-acid chain: Elongation factor Ts (306 aa).

Positions 81-84 (TDFV) are involved in Mg(2+) ion dislocation from EF-Tu.

It belongs to the EF-Ts family.

The protein localises to the cytoplasm. Its function is as follows. Associates with the EF-Tu.GDP complex and induces the exchange of GDP to GTP. It remains bound to the aminoacyl-tRNA.EF-Tu.GTP complex up to the GTP hydrolysis stage on the ribosome. This is Elongation factor Ts from Polaromonas naphthalenivorans (strain CJ2).